The chain runs to 456 residues: Cyclic AMP-responsive element-binding protein 3-like protein 3 (456 aa).

Disordered stretches follow at residues 1-20 and 47-120; these read MDGD…MGPI and GHGE…KGPC. Residues 1–317 are Cytoplasmic-facing; the sequence is MDGDLAIGKM…STSKSAQTGT (317 aa). A compositionally biased stretch (polar residues) spans 71 to 85; sequence DSDSPTWSPAASDSG. Residues 238-301 form the bZIP domain; it reads MLKKIRRKIR…LSLLEQLKKL (64 aa). The basic motif stretch occupies residues 240-269; it reads KKIRRKIRNKQSAQESRKKKKEYIDGLETR. The leucine-zipper stretch occupies residues 280-301; sequence LQRKVLHLEKQNLSLLEQLKKL. Residue K289 forms a Glycyl lysine isopeptide (Lys-Gly) (interchain with G-Cter in ubiquitin) linkage. A helical; Signal-anchor for type II membrane protein membrane pass occupies residues 318 to 338; that stretch reads CIAVLLFSFALIVLPSISPFA. Topologically, residues 339 to 456 are lumenal; it reads SNRAESPGDF…VGLEAAGGEL (118 aa). 2 disordered regions span residues 365-423 and 435-456; these read RVAP…QGNS and CAPP…GGEL. N408 and N415 each carry an N-linked (GlcNAc...) asparagine glycan.

The protein belongs to the bZIP family. ATF subfamily. As to quaternary structure, binds DNA as a dimer. May form homodimers. Interacts with ATF6. Interacts with SYNV1/HRD1; this interaction leads to CREB3L3 ubiquitination and proteasomal degradation. In terms of processing, controlled by regulated intramembrane proteolysis (RIP). Following ER stress a fragment containing the cytoplasmic transcription factor domain is released by proteolysis. The cleavage seems to be performed sequentially by site-1 and site-2 proteases (PS1 and PS2). N-glycosylation is required for optimal proteolytic activation. Post-translationally, ubiquitinated at Lys-289 by SYNV1/HRD1 via 'Lys-27'-linked ubiquitin.

It localises to the endoplasmic reticulum membrane. The protein localises to the nucleus. Transcription factor that may act during endoplasmic reticulum stress by activating unfolded protein response target genes. Activated in response to cAMP stimulation. In vitro, binds the cAMP response element (CRE). Activates transcription through box-B element and CRE. Seems to function synergistically with ATF6. In acute inflammatory response, may activate expression of acute phase response (APR) genes. May be involved in growth suppression. Regulates FGF21 transcription. Plays a crucial role in the regulation of triglyceride metabolism and is required for the maintenance of normal plasma triglyceride concentrations. In Bos taurus (Bovine), this protein is Cyclic AMP-responsive element-binding protein 3-like protein 3 (CREB3L3).